Reading from the N-terminus, the 200-residue chain is Holliday junction branch migration complex subunit RuvA (200 aa).

The interval 1-63 (MIASVRGEVL…EDSMTLYGFP (63 aa)) is domain I. The segment at 64-142 (DSESKELFGL…AVGSTSGAVP (79 aa)) is domain II. The segment at 142–146 (PLGAG) is flexible linker. Positions 147-200 (GGGSVRDQIVEALVGLGFPAKQAEQATDSVLAEAPESTTSSALRSALSLLGKTR) are domain III.

Belongs to the RuvA family. As to quaternary structure, homotetramer. Forms an RuvA(8)-RuvB(12)-Holliday junction (HJ) complex. HJ DNA is sandwiched between 2 RuvA tetramers; dsDNA enters through RuvA and exits via RuvB. An RuvB hexamer assembles on each DNA strand where it exits the tetramer. Each RuvB hexamer is contacted by two RuvA subunits (via domain III) on 2 adjacent RuvB subunits; this complex drives branch migration. In the full resolvosome a probable DNA-RuvA(4)-RuvB(12)-RuvC(2) complex forms which resolves the HJ.

It is found in the cytoplasm. Functionally, the RuvA-RuvB-RuvC complex processes Holliday junction (HJ) DNA during genetic recombination and DNA repair, while the RuvA-RuvB complex plays an important role in the rescue of blocked DNA replication forks via replication fork reversal (RFR). RuvA specifically binds to HJ cruciform DNA, conferring on it an open structure. The RuvB hexamer acts as an ATP-dependent pump, pulling dsDNA into and through the RuvAB complex. HJ branch migration allows RuvC to scan DNA until it finds its consensus sequence, where it cleaves and resolves the cruciform DNA. In Rhodococcus opacus (strain B4), this protein is Holliday junction branch migration complex subunit RuvA.